Consider the following 330-residue polypeptide: Low affinity immunoglobulin gamma Fc region receptor II (330 aa).

The N-terminal stretch at 1–29 (MESNWTVHVFSRTLCHMLLWTAVLNLAAG) is a signal peptide. Residues 30 to 210 (THDLPKAVVK…QGPKSSRSLP (181 aa)) are Extracellular-facing. Ig-like C2-type domains follow at residues 50 to 106 (EDTV…QTRL) and 131 to 189 (GETI…LGRT). 2 disulfide bridges follow: cysteine 57/cysteine 99 and cysteine 138/cysteine 182. 4 N-linked (GlcNAc...) asparagine glycosylation sites follow: asparagine 65, asparagine 92, asparagine 166, and asparagine 173. Residues 211–231 (VLTIVAAVTGIAVAAIVIILV) form a helical membrane-spanning segment. Over 232–330 (SLVYLKKKQV…ETEHDYQNHI (99 aa)) the chain is Cytoplasmic. Residues 261–330 (VGEYRQPSGG…ETEHDYQNHI (70 aa)) are disordered. Tyrosine 290 is modified (phosphotyrosine). Positions 307–312 (ITYSLL) match the ITIM motif motif. Tyrosine 309 is modified (phosphotyrosine; by SRC-type Tyr-kinases). The residue at position 326 (tyrosine 326) is a Phosphotyrosine.

As to quaternary structure, interacts with FGR. Interacts with LYN. In terms of processing, glycosylated. Post-translationally, when coaggregated to BCR, isoform IIB1 and isoform IIB1' become tyrosine phosphorylated and bind to the SH2 domains of the protein tyrosine phosphatase PTPC1. Phosphorylated by SRC-type Tyr-kinases such as LYN, BLK, FYN and SYK. As to expression, widely expressed by cells of hemopoietic origin. The isoforms are differentially expressed. Isoform IIB1 is preferentially expressed by cells of the lymphoid lineage, isoform IIB2 by cells of the myeloid lineage, and isoform IIB3 is released by macrophages and is present in the serum. Isoform IIB1' is expressed in myeloid and lymphoid cell lines, in normal spleen cells, and in resting or LPS-activated B-cells but is not detected in mesenteric lymph node cells.

Its subcellular location is the cell membrane. It localises to the cytoplasm. The protein localises to the cytoskeleton. The protein resides in the secreted. In terms of biological role, receptor for the Fc region of complexed immunoglobulins gamma. Low affinity receptor. Involved in a variety of effector and regulatory functions such as phagocytosis of antigen-antibody complexes from the circulation and modulation of antibody production by B-cells. Isoform IIB1 and isoform IIB1' form caps but fail to mediate endocytosis or phagocytosis. Isoform IIB2 can mediate the endocytosis of soluble immune complexes via clathrin-coated pits. Isoform IIB1 and isoform IIB2 can down-regulate B-cell, T-cell, and mast cell activation when coaggregated to B-cell receptors for AG (BCR), T-cell receptors for AG (TCR), and Fc receptors, respectively. This Mus musculus (Mouse) protein is Low affinity immunoglobulin gamma Fc region receptor II (Fcgr2).